The chain runs to 467 residues: Peroxisome proliferator-activated receptor alpha (467 aa).

The segment at residues 99–173 is a DNA-binding region (nuclear receptor); that stretch reads NIECRICGDK…VGMSHNAIRF (75 aa). 2 consecutive NR C4-type zinc fingers follow at residues 102 to 122 and 139 to 161; these read CRICGDKASGYHYGVHACEGC and CDRSCKIQKKNRNKCQYCRFHKC. Residues 239 to 466 form the NR LBD domain; it reads FVIHDMETLC…PLLQEIYRDM (228 aa). Residues 304-433 form a required for heterodimerization with RXRA region; that stretch reads DQVTLLKYGV…PKLLQKLADL (130 aa).

Belongs to the nuclear hormone receptor family. NR1 subfamily. In terms of assembly, heterodimer; with RXRA. This heterodimerization is required for DNA binding and transactivation activity. Interacts with NCOA3 coactivator. Interacts with CITED2; the interaction stimulates its transcriptional activity. Also interacts with PPARBP in vitro. Interacts with AKAP13, LPIN1, PRDM16 and coactivator NCOA6. Interacts with ASXL1 and ASXL2. Interacts with PER2. Interacts with SIRT1; the interaction seems to be modulated by NAD(+) levels. Interacts with CRY1 and CRY2. In hepatocytes, interacts with PAQR3 and HUWE1; the interactions promote PPARA poylubiquitination and HUWE1-mediated degradation. Post-translationally, ubiquitinated by E3 ubiquitin-protein ligase HUWE1; leading to proteasomal degradation. In terms of processing, phosphorylated.

The protein resides in the nucleus. In terms of biological role, ligand-activated transcription factor. Key regulator of lipid metabolism. Activated by the endogenous ligand 1-palmitoyl-2-oleoyl-sn-glycerol-3-phosphocholine (16:0/18:1-GPC). Activated by oleylethanolamide, a naturally occurring lipid that regulates satiety. Receptor for peroxisome proliferators such as hypolipidemic drugs and fatty acids. Regulates the peroxisomal beta-oxidation pathway of fatty acids. Functions as a transcription activator for the ACOX1 and P450 genes. Transactivation activity requires heterodimerization with RXRA and is antagonized by NR2C2. May be required for the propagation of clock information to metabolic pathways regulated by PER2. This chain is Peroxisome proliferator-activated receptor alpha (PPARA), found in Cavia porcellus (Guinea pig).